A 446-amino-acid chain; its full sequence is Calcium-binding and coiled-coil domain-containing protein 2 (446 aa).

A CLIR motif is present at residues 133–136 (ILVV). Residues 137–349 (TTQGEVEEIE…RENSRLLSYM (213 aa)) adopt a coiled-coil conformation. The LIR-like motif lies at 203–206 (DYWE). The segment at 362–390 (TSDEGGARQNPGLAYGNPYSGIQESSSPS) is disordered. The tract at residues 371–381 (NPGLAYGNPYS) is interaction with LGALS8. Residues 381–390 (SGIQESSSPS) are compositionally biased toward polar residues. Positions 395–446 (KKCPICKADDICDHTLEQQQMQPLCFNCPICDKIFPATEKQIFEDHVFCHSL) are interaction with MYO6. The segment at 419-444 (CFNCPICDKIFPATEKQIFEDHVFCH) adopts a UBZ1-type zinc-finger fold. Positions 422, 425, 440, and 444 each coordinate Zn(2+). Residue serine 445 is modified to Phosphoserine.

It belongs to the CALCOCO family. Dimer. Part of a complex consisting of CALCOCO2, TAX1BP1 and MYO6. Interacts with MYO6. Interacts with GEMIN4. Interacts with ATG8 family members MAP1LC3A, MAP1LC3B, GABARAP, GABARAPL1 and GABARAPL2. Interacts with ATG8 family member MAP1LC3C. Interacts with LGALS8. Interacts with TOM1; the interaction is indirect and is mediated by MYO6, which acts as a bridge between TOM1 and CALCOCO2. Interacts with AZI2. As to quaternary structure, (Microbial infection) Interacts with Lassa virus protein Z. In terms of assembly, (Microbial infection) Interacts with Mopeia virus protein Z. In terms of processing, (Microbial infection) Cleaved by S.pyogenes SpeB protease; leading to its degradation. Degradation by SpeB prevents autophagy, promoting to S.pyogenes intracellular replication. As to expression, expressed in all tissues tested with highest expression in skeletal muscle and lowest in brain.

Its subcellular location is the cytoplasm. It localises to the perinuclear region. It is found in the cytoskeleton. The protein resides in the cytoplasmic vesicle. The protein localises to the autophagosome membrane. Xenophagy-specific receptor required for autophagy-mediated intracellular bacteria degradation. Acts as an effector protein of galectin-sensed membrane damage that restricts the proliferation of infecting pathogens such as Salmonella typhimurium upon entry into the cytosol by targeting LGALS8-associated bacteria for autophagy. Initially orchestrates bacteria targeting to autophagosomes and subsequently ensures pathogen degradation by regulating pathogen-containing autophagosome maturation. Bacteria targeting to autophagosomes relies on its interaction with MAP1LC3A, MAP1LC3B and/or GABARAPL2, whereas regulation of pathogen-containing autophagosome maturation requires the interaction with MAP3LC3C. May play a role in ruffle formation and actin cytoskeleton organization and seems to negatively regulate constitutive secretion. The sequence is that of Calcium-binding and coiled-coil domain-containing protein 2 (CALCOCO2) from Homo sapiens (Human).